We begin with the raw amino-acid sequence, 359 residues long: UDP-3-O-acylglucosamine N-acyltransferase (359 aa).

Catalysis depends on His253, which acts as the Proton acceptor.

This sequence belongs to the transferase hexapeptide repeat family. LpxD subfamily. As to quaternary structure, homotrimer.

It catalyses the reaction a UDP-3-O-[(3R)-3-hydroxyacyl]-alpha-D-glucosamine + a (3R)-hydroxyacyl-[ACP] = a UDP-2-N,3-O-bis[(3R)-3-hydroxyacyl]-alpha-D-glucosamine + holo-[ACP] + H(+). The protein operates within bacterial outer membrane biogenesis; LPS lipid A biosynthesis. Its function is as follows. Catalyzes the N-acylation of UDP-3-O-acylglucosamine using 3-hydroxyacyl-ACP as the acyl donor. Is involved in the biosynthesis of lipid A, a phosphorylated glycolipid that anchors the lipopolysaccharide to the outer membrane of the cell. In Burkholderia cenocepacia (strain ATCC BAA-245 / DSM 16553 / LMG 16656 / NCTC 13227 / J2315 / CF5610) (Burkholderia cepacia (strain J2315)), this protein is UDP-3-O-acylglucosamine N-acyltransferase.